We begin with the raw amino-acid sequence, 104 residues long: UPF0473 protein SH1304 (104 aa).

This sequence belongs to the UPF0473 family.

The chain is UPF0473 protein SH1304 from Staphylococcus haemolyticus (strain JCSC1435).